Reading from the N-terminus, the 305-residue chain is Protoheme IX farnesyltransferase (305 aa).

The next 9 helical transmembrane spans lie at 31-51, 52-72, 102-119, 123-145, 151-171, 179-199, 225-245, 247-267, and 284-304; these read VMSL…YSVH, PFIA…AGAI, ALSF…FMAL, LLAS…IWLK, NIVI…AAVS, IILF…LALF, ILIY…IGMN, FIYL…SGSL, and SIFY…ISLI.

Belongs to the UbiA prenyltransferase family. Protoheme IX farnesyltransferase subfamily.

The protein resides in the cell inner membrane. The enzyme catalyses heme b + (2E,6E)-farnesyl diphosphate + H2O = Fe(II)-heme o + diphosphate. The protein operates within porphyrin-containing compound metabolism; heme O biosynthesis; heme O from protoheme: step 1/1. In terms of biological role, converts heme B (protoheme IX) to heme O by substitution of the vinyl group on carbon 2 of heme B porphyrin ring with a hydroxyethyl farnesyl side group. In Rickettsia felis (strain ATCC VR-1525 / URRWXCal2) (Rickettsia azadi), this protein is Protoheme IX farnesyltransferase.